The sequence spans 508 residues: Replication factor C large subunit (508 aa).

Position 43 to 50 (43 to 50 (GSPGIGKT)) interacts with ATP. A disordered region spans residues 425–508 (AVEHSGGVFE…DQQSGLSDFM (84 aa)). 2 stretches are compositionally biased toward acidic residues: residues 443 to 461 (GDSD…EESG) and 483 to 500 (TTDD…DDDQ).

The protein belongs to the activator 1 small subunits family. RfcL subfamily. As to quaternary structure, heteromultimer composed of small subunits (RfcS) and large subunits (RfcL).

Part of the RFC clamp loader complex which loads the PCNA sliding clamp onto DNA. This chain is Replication factor C large subunit, found in Haloarcula marismortui (strain ATCC 43049 / DSM 3752 / JCM 8966 / VKM B-1809) (Halobacterium marismortui).